The chain runs to 452 residues: tRNA modification GTPase MnmE (452 aa).

Residues R21, E78, and K118 each contribute to the (6S)-5-formyl-5,6,7,8-tetrahydrofolate site. A TrmE-type G domain is found at 214-375 (GMKVVIAGRP…LREHLKQSMG (162 aa)). N224 lines the K(+) pocket. Residues 224–229 (NAGKSS), 243–249 (TDIAGTT), 268–271 (DTAG), and 333–336 (NKAD) each bind GTP. S228 is a binding site for Mg(2+). Residues T243, I245, and T248 each contribute to the K(+) site. T249 is a Mg(2+) binding site. Residue K452 coordinates (6S)-5-formyl-5,6,7,8-tetrahydrofolate.

This sequence belongs to the TRAFAC class TrmE-Era-EngA-EngB-Septin-like GTPase superfamily. TrmE GTPase family. Homodimer. Heterotetramer of two MnmE and two MnmG subunits. The cofactor is K(+).

It localises to the cytoplasm. Functionally, exhibits a very high intrinsic GTPase hydrolysis rate. Involved in the addition of a carboxymethylaminomethyl (cmnm) group at the wobble position (U34) of certain tRNAs, forming tRNA-cmnm(5)s(2)U34. In Pasteurella multocida (strain Pm70), this protein is tRNA modification GTPase MnmE.